The following is a 541-amino-acid chain: Chaperonin GroEL 1 (541 aa).

ATP is bound by residues 29 to 32 (TIGP), 86 to 90 (DGTTT), Gly-415, 479 to 481 (NAA), and Asp-495.

This sequence belongs to the chaperonin (HSP60) family. Forms a cylinder of 14 subunits composed of two heptameric rings stacked back-to-back. Interacts with the co-chaperonin GroES.

The protein resides in the cytoplasm. It catalyses the reaction ATP + H2O + a folded polypeptide = ADP + phosphate + an unfolded polypeptide.. In terms of biological role, together with its co-chaperonin GroES, plays an essential role in assisting protein folding. The GroEL-GroES system forms a nano-cage that allows encapsulation of the non-native substrate proteins and provides a physical environment optimized to promote and accelerate protein folding. In Streptomyces coelicolor (strain ATCC BAA-471 / A3(2) / M145), this protein is Chaperonin GroEL 1.